Consider the following 818-residue polypeptide: Actin filament-associated protein 1-like 2 (818 aa).

Position 56 is a phosphotyrosine (tyrosine 56). Positions 66–163 (QNAESQGKAP…SKGKSAPYQW (98 aa)) are disordered. A compositionally biased stretch (polar residues) spans 85 to 94 (EPSQHSSAPQ). Residues 123–139 (YYEEAEPYDTSLNEDGE) show a composition bias toward acidic residues. PH domains are found at residues 175 to 271 (DARI…EVSG) and 353 to 447 (SLET…SESG). Residue serine 408 is modified to Phosphoserine. Tyrosine 413 is subject to Phosphotyrosine. Serine 484 is modified (phosphoserine). The interval 513 to 532 (AAVEPTEEATPVADDPNERE) is disordered. The stretch at 652 to 749 (AEIKLGKNRT…VKDNLKKAEA (98 aa)) forms a coiled coil. Residues 765–787 (NVSPRPKAVTPASAPDCTPVNSA) form a disordered region.

Interacts with SRC. Interacts with LCK when tyrosine phosphorylated. Post-translationally, tyrosine phosphorylated (by SRC). Detected in spleen and thyroid, and at lower levels in kidney, brain, lung and pancreas.

The protein resides in the cytoplasm. In terms of biological role, may play a role in a signaling cascade by enhancing the kinase activity of SRC. Contributes to SRC-regulated transcription activation. The sequence is that of Actin filament-associated protein 1-like 2 (AFAP1L2) from Homo sapiens (Human).